A 210-amino-acid chain; its full sequence is Putative odorant-binding protein A5 (210 aa).

The signal sequence occupies residues 1-19 (MKLPALHLLFLGFICLARS).

It belongs to the phosphatidylethanolamine-binding protein family. As to expression, cells at the bases of a few scattered sensilla on the posterior surface of the antenna.

It localises to the secreted. This Drosophila melanogaster (Fruit fly) protein is Putative odorant-binding protein A5 (a5).